We begin with the raw amino-acid sequence, 247 residues long: Cobalt transport protein CbiM (247 aa).

An N-terminal signal peptide occupies residues 1 to 21 (MVGWGVLILLMVLWLPRQAYA). 7 helical membrane-spanning segments follow: residues 27–47 (GYLP…ALIL), 64–84 (LVLA…LPSV), 96–116 (LGAV…ILLF), 119–139 (LLLA…MAVV), 159–179 (GVAV…TTSL), 181–201 (LALA…KFAS), and 202–222 (IFAV…VIMV).

Belongs to the CbiM family. Forms an energy-coupling factor (ECF) transporter complex composed of an ATP-binding protein (A component, CbiO), a transmembrane protein (T component, CbiQ) and 2 possible substrate-capture proteins (S components, CbiM and CbiN) of unknown stoichimetry.

The protein resides in the cell membrane. The protein operates within cofactor biosynthesis; adenosylcobalamin biosynthesis. In terms of biological role, part of the energy-coupling factor (ECF) transporter complex CbiMNOQ involved in cobalt import. The protein is Cobalt transport protein CbiM of Kyrpidia tusciae (strain DSM 2912 / NBRC 15312 / T2) (Bacillus tusciae).